The following is a 60-amino-acid chain: Large ribosomal subunit protein uL30 (60 aa).

It belongs to the universal ribosomal protein uL30 family. In terms of assembly, part of the 50S ribosomal subunit.

This chain is Large ribosomal subunit protein uL30, found in Acidovorax ebreus (strain TPSY) (Diaphorobacter sp. (strain TPSY)).